Here is a 236-residue protein sequence, read N- to C-terminus: Endo-1,4-beta-xylanase 3 (236 aa).

Residues 1-45 (MQILTWALAALAAIPAVTAAPVETVEASSMDELVERSPNVTLVAR) form the signal peptide. N-linked (GlcNAc...) asparagine glycans are attached at residues asparagine 39 and asparagine 106. The 191-residue stretch at 46-236 (GTPSSTGTHN…SSGSASMTVR (191 aa)) folds into the GH11 domain. Residue glutamate 131 is the Nucleophile of the active site. Glutamate 223 (proton donor) is an active-site residue.

This sequence belongs to the glycosyl hydrolase 11 (cellulase G) family.

It localises to the secreted. It catalyses the reaction Endohydrolysis of (1-&gt;4)-beta-D-xylosidic linkages in xylans.. It participates in glycan degradation; xylan degradation. Functionally, endo-1,4-beta-xylanase involved in the hydrolysis of xylan, a major structural heterogeneous polysaccharide found in plant biomass representing the second most abundant polysaccharide in the biosphere, after cellulose. The polypeptide is Endo-1,4-beta-xylanase 3 (XYL3) (Pyricularia grisea (Crabgrass-specific blast fungus)).